We begin with the raw amino-acid sequence, 467 residues long: 3-isopropylmalate dehydratase large subunit (467 aa).

C347, C407, and C410 together coordinate [4Fe-4S] cluster.

The protein belongs to the aconitase/IPM isomerase family. LeuC type 1 subfamily. In terms of assembly, heterodimer of LeuC and LeuD. [4Fe-4S] cluster serves as cofactor.

The catalysed reaction is (2R,3S)-3-isopropylmalate = (2S)-2-isopropylmalate. The protein operates within amino-acid biosynthesis; L-leucine biosynthesis; L-leucine from 3-methyl-2-oxobutanoate: step 2/4. In terms of biological role, catalyzes the isomerization between 2-isopropylmalate and 3-isopropylmalate, via the formation of 2-isopropylmaleate. In Synechococcus sp. (strain JA-3-3Ab) (Cyanobacteria bacterium Yellowstone A-Prime), this protein is 3-isopropylmalate dehydratase large subunit.